Reading from the N-terminus, the 124-residue chain is S-adenosylmethionine decarboxylase proenzyme (124 aa).

The Schiff-base intermediate with substrate; via pyruvic acid role is filled by Ser63. Pyruvic acid (Ser); by autocatalysis is present on Ser63. His68 (proton acceptor; for processing activity) is an active-site residue. Cys83 serves as the catalytic Proton donor; for catalytic activity.

The protein belongs to the prokaryotic AdoMetDC family. Type 1 subfamily. Heterotetramer of two alpha and two beta chains arranged as a dimer of alpha/beta heterodimers. Pyruvate serves as cofactor. In terms of processing, is synthesized initially as an inactive proenzyme. Formation of the active enzyme involves a self-maturation process in which the active site pyruvoyl group is generated from an internal serine residue via an autocatalytic post-translational modification. Two non-identical subunits are generated from the proenzyme in this reaction, and the pyruvate is formed at the N-terminus of the alpha chain, which is derived from the carboxyl end of the proenzyme. The post-translation cleavage follows an unusual pathway, termed non-hydrolytic serinolysis, in which the side chain hydroxyl group of the serine supplies its oxygen atom to form the C-terminus of the beta chain, while the remainder of the serine residue undergoes an oxidative deamination to produce ammonia and the pyruvoyl group blocking the N-terminus of the alpha chain.

It catalyses the reaction S-adenosyl-L-methionine + H(+) = S-adenosyl 3-(methylsulfanyl)propylamine + CO2. It functions in the pathway amine and polyamine biosynthesis; S-adenosylmethioninamine biosynthesis; S-adenosylmethioninamine from S-adenosyl-L-methionine: step 1/1. In terms of biological role, catalyzes the decarboxylation of S-adenosylmethionine to S-adenosylmethioninamine (dcAdoMet), the propylamine donor required for the synthesis of the polyamines spermine and spermidine from the diamine putrescine. This Caldanaerobacter subterraneus subsp. tengcongensis (strain DSM 15242 / JCM 11007 / NBRC 100824 / MB4) (Thermoanaerobacter tengcongensis) protein is S-adenosylmethionine decarboxylase proenzyme.